A 147-amino-acid polypeptide reads, in one-letter code: Large ribosomal subunit protein bL9 (147 aa).

This sequence belongs to the bacterial ribosomal protein bL9 family.

Functionally, binds to the 23S rRNA. This chain is Large ribosomal subunit protein bL9, found in Flavobacterium psychrophilum (strain ATCC 49511 / DSM 21280 / CIP 103535 / JIP02/86).